We begin with the raw amino-acid sequence, 123 residues long: Large ribosomal subunit protein bL12 (123 aa).

It belongs to the bacterial ribosomal protein bL12 family. In terms of assembly, homodimer. Part of the ribosomal stalk of the 50S ribosomal subunit. Forms a multimeric L10(L12)X complex, where L10 forms an elongated spine to which 2 to 4 L12 dimers bind in a sequential fashion. Binds GTP-bound translation factors.

Forms part of the ribosomal stalk which helps the ribosome interact with GTP-bound translation factors. Is thus essential for accurate translation. The polypeptide is Large ribosomal subunit protein bL12 (Borrelia duttonii (strain Ly)).